The primary structure comprises 219 residues: Ribose-5-phosphate isomerase A (219 aa).

Substrate contacts are provided by residues 28 to 31 (TGST), 81 to 84 (DGAD), and 94 to 97 (KGGG). Residue glutamate 103 is the Proton acceptor of the active site. Lysine 121 lines the substrate pocket.

This sequence belongs to the ribose 5-phosphate isomerase family. As to quaternary structure, homodimer.

It carries out the reaction aldehydo-D-ribose 5-phosphate = D-ribulose 5-phosphate. Its pathway is carbohydrate degradation; pentose phosphate pathway; D-ribose 5-phosphate from D-ribulose 5-phosphate (non-oxidative stage): step 1/1. Functionally, catalyzes the reversible conversion of ribose-5-phosphate to ribulose 5-phosphate. In Shewanella pealeana (strain ATCC 700345 / ANG-SQ1), this protein is Ribose-5-phosphate isomerase A.